A 231-amino-acid chain; its full sequence is MKVGIIGAMQQEVAILKEAMTNAQTVNKAGCTFYSGQINGVEVVLLQSGIGKVAAAIGTTILLDEYQPDMVLNTGSAGGFDSSLNLGDVVISTEVRHHDADVTAFGYEMGQMAGQPAAFLADEKLMNLAEKALEQMDGQHAVRGLICTGDAFVCTAERQAFIRQHFPSVIAVEMEASAIAQTCHQFKVPFVVVRAISDVADKESPMSFEEFLPLAAKSSSEMVFKMLELLK.

The active-site Proton acceptor is E12. Substrate is bound by residues G78, V153, and 174–175; that span reads ME. D198 acts as the Proton donor in catalysis.

This sequence belongs to the PNP/UDP phosphorylase family. MtnN subfamily.

The catalysed reaction is S-adenosyl-L-homocysteine + H2O = S-(5-deoxy-D-ribos-5-yl)-L-homocysteine + adenine. It carries out the reaction S-methyl-5'-thioadenosine + H2O = 5-(methylsulfanyl)-D-ribose + adenine. It catalyses the reaction 5'-deoxyadenosine + H2O = 5-deoxy-D-ribose + adenine. It functions in the pathway amino-acid biosynthesis; L-methionine biosynthesis via salvage pathway; S-methyl-5-thio-alpha-D-ribose 1-phosphate from S-methyl-5'-thioadenosine (hydrolase route): step 1/2. Functionally, catalyzes the irreversible cleavage of the glycosidic bond in both 5'-methylthioadenosine (MTA) and S-adenosylhomocysteine (SAH/AdoHcy) to adenine and the corresponding thioribose, 5'-methylthioribose and S-ribosylhomocysteine, respectively. Also cleaves 5'-deoxyadenosine, a toxic by-product of radical S-adenosylmethionine (SAM) enzymes, into 5-deoxyribose and adenine. The chain is 5'-methylthioadenosine/S-adenosylhomocysteine nucleosidase from Vibrio vulnificus (strain YJ016).